We begin with the raw amino-acid sequence, 30 residues long: MHLSTLPNVPWPNRSFTTKRPPLPNMSFSW.

A disordered region spans residues 1 to 30; that stretch reads MHLSTLPNVPWPNRSFTTKRPPLPNMSFSW.

This is an uncharacterized protein from Saccharomyces cerevisiae (strain ATCC 204508 / S288c) (Baker's yeast).